A 137-amino-acid chain; its full sequence is Prostate and testis expressed protein 13 (137 aa).

An N-terminal signal peptide occupies residues methionine 1–arginine 20. The UPAR/Ly6 domain maps to arginine 28–glycine 114. Cystine bridges form between cysteine 30–cysteine 60, cysteine 33–cysteine 41, cysteine 48–cysteine 84, cysteine 87–cysteine 104, and cysteine 105–cysteine 111. An N-linked (GlcNAc...) asparagine glycan is attached at asparagine 57.

This sequence belongs to the PATE family. Strongly expressed in the epididymis, including the initial segment, caput, corpus and cauda regions. Weakly expressed in prostate.

It localises to the secreted. The protein is Prostate and testis expressed protein 13 of Mus musculus (Mouse).